A 138-amino-acid chain; its full sequence is Holo-[acyl-carrier-protein] synthase (138 aa).

Mg(2+) is bound by residues aspartate 8 and glutamate 54.

Belongs to the P-Pant transferase superfamily. AcpS family. The cofactor is Mg(2+).

The protein resides in the cytoplasm. It catalyses the reaction apo-[ACP] + CoA = holo-[ACP] + adenosine 3',5'-bisphosphate + H(+). Its function is as follows. Transfers the 4'-phosphopantetheine moiety from coenzyme A to a Ser of acyl-carrier-protein. This is Holo-[acyl-carrier-protein] synthase from Roseiflexus sp. (strain RS-1).